The chain runs to 78 residues: Delta-conotoxin-like Ai6.1 (78 aa).

The N-terminal stretch at 1 to 22 (MKLTCVMIVAVLFLTAWTFATA) is a signal peptide. Positions 23–49 (DDPRNGLGNLFSNAHHEMKNPEASKLN) are excised as a propeptide. Cystine bridges form between Cys53–Cys68, Cys60–Cys72, and Cys67–Cys77.

Belongs to the conotoxin O1 superfamily. As to expression, expressed by the venom duct.

The protein resides in the secreted. Functionally, delta-conotoxins bind to site 6 of voltage-gated sodium channels (Nav) and inhibit the inactivation process. The sequence is that of Delta-conotoxin-like Ai6.1 from Conus ammiralis (Admiral cone).